The chain runs to 264 residues: Chymotrypsin-like protease CTRL-1 (264 aa).

Residues methionine 1–glycine 18 form the signal peptide. The propeptide at cysteine 19 to arginine 33 is activation peptide. Cystine bridges form between cysteine 19-cysteine 141, cysteine 60-cysteine 76, cysteine 155-cysteine 220, cysteine 187-cysteine 201, and cysteine 210-cysteine 239. In terms of domain architecture, Peptidase S1 spans isoleucine 34–alanine 262. The active-site Charge relay system is histidine 75. Asparagine 114 carries an N-linked (GlcNAc...) asparagine glycan. Catalysis depends on aspartate 121, which acts as the Charge relay system. Residue serine 214 is the Charge relay system of the active site.

The protein belongs to the peptidase S1 family.

The polypeptide is Chymotrypsin-like protease CTRL-1 (CTRL) (Homo sapiens (Human)).